The primary structure comprises 399 residues: Tyrosine--tRNA ligase (399 aa).

The 'HIGH' region motif lies at 42–51 (PTAPDLHLGH). Positions 226-230 (KMSKS) match the 'KMSKS' region motif. An ATP-binding site is contributed by Lys-229. Residues 337–398 (IAIANLLKDA…GKRKFARITV (62 aa)) form the S4 RNA-binding domain.

It belongs to the class-I aminoacyl-tRNA synthetase family. TyrS type 2 subfamily. Homodimer.

Its subcellular location is the cytoplasm. The enzyme catalyses tRNA(Tyr) + L-tyrosine + ATP = L-tyrosyl-tRNA(Tyr) + AMP + diphosphate + H(+). Its function is as follows. Catalyzes the attachment of tyrosine to tRNA(Tyr) in a two-step reaction: tyrosine is first activated by ATP to form Tyr-AMP and then transferred to the acceptor end of tRNA(Tyr). This is Tyrosine--tRNA ligase from Colwellia psychrerythraea (strain 34H / ATCC BAA-681) (Vibrio psychroerythus).